Consider the following 701-residue polypeptide: Elongation factor G (701 aa).

The tr-type G domain occupies 8-290 (SLYRNIGISA…AVIDYLPAPT (283 aa)). GTP contacts are provided by residues 17 to 24 (AHIDAGKT), 88 to 92 (DTPGH), and 142 to 145 (NKMD).

Belongs to the TRAFAC class translation factor GTPase superfamily. Classic translation factor GTPase family. EF-G/EF-2 subfamily.

Its subcellular location is the cytoplasm. Functionally, catalyzes the GTP-dependent ribosomal translocation step during translation elongation. During this step, the ribosome changes from the pre-translocational (PRE) to the post-translocational (POST) state as the newly formed A-site-bound peptidyl-tRNA and P-site-bound deacylated tRNA move to the P and E sites, respectively. Catalyzes the coordinated movement of the two tRNA molecules, the mRNA and conformational changes in the ribosome. This chain is Elongation factor G, found in Haemophilus ducreyi (strain 35000HP / ATCC 700724).